The primary structure comprises 204 residues: ATP-dependent Clp protease proteolytic subunit (204 aa).

The Nucleophile role is filled by Ser-101. His-126 is a catalytic residue.

Belongs to the peptidase S14 family. In terms of assembly, fourteen ClpP subunits assemble into 2 heptameric rings which stack back to back to give a disk-like structure with a central cavity, resembling the structure of eukaryotic proteasomes.

It is found in the cytoplasm. It carries out the reaction Hydrolysis of proteins to small peptides in the presence of ATP and magnesium. alpha-casein is the usual test substrate. In the absence of ATP, only oligopeptides shorter than five residues are hydrolyzed (such as succinyl-Leu-Tyr-|-NHMec, and Leu-Tyr-Leu-|-Tyr-Trp, in which cleavage of the -Tyr-|-Leu- and -Tyr-|-Trp bonds also occurs).. Its function is as follows. Cleaves peptides in various proteins in a process that requires ATP hydrolysis. Has a chymotrypsin-like activity. Plays a major role in the degradation of misfolded proteins. The protein is ATP-dependent Clp protease proteolytic subunit of Deinococcus radiodurans (strain ATCC 13939 / DSM 20539 / JCM 16871 / CCUG 27074 / LMG 4051 / NBRC 15346 / NCIMB 9279 / VKM B-1422 / R1).